The primary structure comprises 1190 residues: Wings apart-like protein homolog (1190 aa).

Disordered regions lie at residues 1 to 23 (MTSR…FDEV) and 46 to 82 (QKRP…DESL). The tract at residues 1–659 (MTSRFGKTYS…ENQEFTDDIE (659 aa)) is mediates interaction with the cohesin complex. The segment covering 54–66 (DIQEIPKKPKVEE) has biased composition (basic and acidic residues). An FGF motif 1 motif is present at residues 73–75 (FGF). Serine 77 is subject to Phosphoserine. Residue lysine 168 is modified to N6-acetyllysine. Phosphoserine occurs at positions 221, 223, and 226. Residues 260–286 (LLEMKDDDFKNRLENLNEAIEEDIVQS) are a coiled coil. Phosphoserine is present on residues serine 347 and serine 380. The short motif at 429–431 (FGF) is the FGF motif 2 element. Position 443 is a phosphoserine (serine 443). An FGF motif 3 motif is present at residues 453-455 (FGF). Phosphoserine occurs at positions 459 and 461. A compositionally biased stretch (acidic residues) spans 459–469 (SESEDDEDDDC). The segment at 459 to 553 (SESEDDEDDD…SGPKRSPTKA (95 aa)) is disordered. A compositionally biased stretch (polar residues) spans 494–509 (SNDNSQDSQSGTNNAE). Positions 531–540 (QGDKSKENTR) are enriched in basic and acidic residues. One can recognise a WAPL domain in the interval 626 to 1169 (RREDKELYTV…KKFLSFMNLT (544 aa)). The stretch at 749–782 (ELEQDASSAKLLNEKDMNKIKEKIRRLCETVHNK) forms a coiled coil. A Phosphoserine modification is found at serine 904.

This sequence belongs to the WAPL family. In terms of assembly, interacts with the cohesin complex throughout the cell cycle; interacts with both chromatin-bound and soluble pools of the complex. Interacts with RAD21; the interaction is direct. Interacts with PDS5A; the interaction is direct, cohesin-dependent and competitive with CDCA5/SORORIN. Interacts (via FGF motifs) with PDS5B; the interaction is direct. Interacts with a SMC1 protein (SMC1A or SMC1B) and SMC3. As to quaternary structure, (Microbial infection) Isoform 2 interacts with Epstein-Barr virus EBNA2. In terms of processing, deubiquitinated by USP37; leading to stabilization. As to expression, isoform 1 is highly expressed in uterine cervix tumor. Isoform 2 is widely expressed with a high level in skeletal muscle and heart.

The protein localises to the nucleus. It is found in the chromosome. The protein resides in the cytoplasm. Functionally, regulator of sister chromatid cohesion in mitosis which negatively regulates cohesin association with chromatin. Involved in both sister chromatid cohesion during interphase and sister-chromatid resolution during early stages of mitosis. Couples DNA replication to sister chromatid cohesion. Cohesion ensures that chromosome partitioning is accurate in both meiotic and mitotic cells and plays an important role in DNA repair. The chain is Wings apart-like protein homolog from Homo sapiens (Human).